The primary structure comprises 140 residues: NADPH-dependent 7-cyano-7-deazaguanine reductase (140 aa).

Residue C49 is the Thioimide intermediate of the active site. The Proton donor role is filled by D56. Substrate contacts are provided by residues 71–73 (IEL) and 90–91 (HE).

Belongs to the GTP cyclohydrolase I family. QueF type 1 subfamily.

It is found in the cytoplasm. It carries out the reaction 7-aminomethyl-7-carbaguanine + 2 NADP(+) = 7-cyano-7-deazaguanine + 2 NADPH + 3 H(+). It functions in the pathway tRNA modification; tRNA-queuosine biosynthesis. Its function is as follows. Catalyzes the NADPH-dependent reduction of 7-cyano-7-deazaguanine (preQ0) to 7-aminomethyl-7-deazaguanine (preQ1). The protein is NADPH-dependent 7-cyano-7-deazaguanine reductase of Prochlorococcus marinus (strain NATL2A).